The primary structure comprises 299 residues: Probable lipid kinase YegS (299 aa).

A DAGKc domain is found at 2-133; that stretch reads AEFPASLLIL…IDMAQVNKQT (132 aa). Residues Thr40, 66-72, and Thr95 contribute to the ATP site; that span reads GDGTINE. Residues Leu215, Asp218, and Leu220 each coordinate Mg(2+). The active-site Proton acceptor is Glu271.

This sequence belongs to the diacylglycerol/lipid kinase family. YegS lipid kinase subfamily. Mg(2+) serves as cofactor. It depends on Ca(2+) as a cofactor.

It localises to the cytoplasm. Its function is as follows. Probably phosphorylates lipids; the in vivo substrate is unknown. The polypeptide is Probable lipid kinase YegS (Escherichia coli O45:K1 (strain S88 / ExPEC)).